Consider the following 160-residue polypeptide: Serine-protein kinase RsbW (160 aa).

It belongs to the anti-sigma-factor family.

It carries out the reaction L-seryl-[protein] + ATP = O-phospho-L-seryl-[protein] + ADP + H(+). The enzyme catalyses L-threonyl-[protein] + ATP = O-phospho-L-threonyl-[protein] + ADP + H(+). Negative regulator of sigma-B activity. Phosphorylates and inactivates its specific antagonist protein, RsbV. Upon phosphorylation of RsbV, RsbW is released and binds to sigma-B, thereby blocking its ability to form an RNA polymerase holoenzyme (E-sigma-B). In Bacillus licheniformis, this protein is Serine-protein kinase RsbW.